The primary structure comprises 1434 residues: Probable ATP-dependent RNA helicase spindle-E (1434 aa).

Positions 125–292 (LAAINAHPVI…FATTNSIPPV (168 aa)) constitute a Helicase ATP-binding domain. 138–145 (GETGCGKT) is an ATP binding site. Positions 238-241 (DEVH) match the DEAH box motif. The 188-residue stretch at 339–526 (KIIVIIDNME…NSVLKAKVLN (188 aa)) folds into the Helicase C-terminal domain. The 64-residue stretch at 938 to 1001 (AGDITKGMMV…RLMPRELTEQ (64 aa)) folds into the Tudor domain.

It belongs to the DEAD box helicase family. DEAH subfamily.

It localises to the cytoplasm. It catalyses the reaction ATP + H2O = ADP + phosphate + H(+). In terms of biological role, probable ATP-binding RNA helicase which plays a central role during spermatogenesis and oogenesis by repressing transposable elements and preventing their mobilization, which is essential for the germline integrity. Acts via the piRNA metabolic process, which mediates the repression of transposable elements during meiosis by forming complexes composed of piRNAs and Piwi and govern the methylation and subsequent repression of transposons. Involved in the repression of LTR retrotransposon copia. Also involved in telomere regulation by repressing specialized telomeric retroelements HeT-A, TAHRE, and TART; Drosophila telomeres being maintained by transposition of specialized telomeric retroelements. Involved in telomeric trans-silencing, a repression mechanism by which a transposon or a transgene inserted in subtelomeric heterochromatin has the capacity to repress in trans in the female germline, a homologous transposon, or transgene located in euchromatin. Involved in the repression of testis-expressed Stellate genes by the homologous Su(Ste) repeats. Required for anteroposterior and dorsoventral axis formation during oogenesis. This chain is Probable ATP-dependent RNA helicase spindle-E (spn-E), found in Drosophila sechellia (Fruit fly).